Here is a 165-residue protein sequence, read N- to C-terminus: Large ribosomal subunit protein uL10 (165 aa).

This sequence belongs to the universal ribosomal protein uL10 family. In terms of assembly, part of the ribosomal stalk of the 50S ribosomal subunit. The N-terminus interacts with L11 and the large rRNA to form the base of the stalk. The C-terminus forms an elongated spine to which L12 dimers bind in a sequential fashion forming a multimeric L10(L12)X complex.

In terms of biological role, forms part of the ribosomal stalk, playing a central role in the interaction of the ribosome with GTP-bound translation factors. The sequence is that of Large ribosomal subunit protein uL10 from Burkholderia lata (strain ATCC 17760 / DSM 23089 / LMG 22485 / NCIMB 9086 / R18194 / 383).